A 90-amino-acid polypeptide reads, in one-letter code: Mitochondrial import inner membrane translocase subunit Tim10-B (90 aa).

A Twin CX3C motif motif is present at residues 29–54 (CHKKCVPPHYKEAELSKGESVCLDRC). Intrachain disulfides connect Cys-29–Cys-54 and Cys-33–Cys-50.

The protein belongs to the small Tim family. Heterohexamer; composed of 3 copies of TIMM9 and 3 copies of TIMM10/TIM10A, named soluble 70 kDa complex. The complex forms a 6-bladed alpha-propeller structure and associates with the TIMM22 component of the TIM22 complex. Interacts with multi-pass transmembrane proteins in transit.

It localises to the mitochondrion inner membrane. Mitochondrial intermembrane chaperone that participates in the import and insertion of multi-pass transmembrane proteins into the mitochondrial inner membrane. May also be required for the transfer of beta-barrel precursors from the TOM complex to the sorting and assembly machinery (SAM complex) of the outer membrane. Acts as a chaperone-like protein that protects the hydrophobic precursors from aggregation and guide them through the mitochondrial intermembrane space. The sequence is that of Mitochondrial import inner membrane translocase subunit Tim10-B (timm10-b) from Xenopus laevis (African clawed frog).